Consider the following 32-residue polypeptide: Alpha-2-macroglobulin homolog (32 aa).

A cross-link (isoglutamyl cysteine thioester (Cys-Gln)) is located at residues 16-19 (CGEQ).

It belongs to the protease inhibitor I39 (alpha-2-macroglobulin) family. In terms of assembly, homodimer; disulfide-linked.

It localises to the secreted. Its function is as follows. Is able to inhibit all four classes of proteinases by a unique 'trapping' mechanism. This protein has a peptide stretch, called the 'bait region' which contains specific cleavage sites for different proteinases. When a proteinase cleaves the bait region, a conformational change is induced in the protein which traps the proteinase. The entrapped enzyme remains active against low molecular weight substrates (activity against high molecular weight substrates is greatly reduced). Following cleavage in the bait region a thioester bond is hydrolyzed and mediates the covalent binding of the protein to the proteinase. The protein is Alpha-2-macroglobulin homolog of Pacifastacus leniusculus (Signal crayfish).